Here is a 145-residue protein sequence, read N- to C-terminus: Cytochrome c-type biogenesis protein CcmE (145 aa).

Residues 1 to 7 (MKAKHQR) are Cytoplasmic-facing. The helical; Signal-anchor for type II membrane protein transmembrane segment at 8-28 (LILAVAALCGVAGAGVLAASA) threads the bilayer. Residues 29–145 (LRDEAAYFRT…PKNMKAAVEG (117 aa)) lie on the Periplasmic side of the membrane. Positions 123 and 127 each coordinate heme.

This sequence belongs to the CcmE/CycJ family.

Its subcellular location is the cell inner membrane. Functionally, heme chaperone required for the biogenesis of c-type cytochromes. Transiently binds heme delivered by CcmC and transfers the heme to apo-cytochromes in a process facilitated by CcmF and CcmH. The protein is Cytochrome c-type biogenesis protein CcmE of Sphingopyxis alaskensis (strain DSM 13593 / LMG 18877 / RB2256) (Sphingomonas alaskensis).